The primary structure comprises 40 residues: Photosystem II reaction center protein T (40 aa).

The helical transmembrane segment at 3–23 (ALVYTFLLVGTLGIIFFAIFF) threads the bilayer.

This sequence belongs to the PsbT family. As to quaternary structure, PSII is composed of 1 copy each of membrane proteins PsbA, PsbB, PsbC, PsbD, PsbE, PsbF, PsbH, PsbI, PsbJ, PsbK, PsbL, PsbM, PsbT, PsbY, PsbZ, Psb30/Ycf12, at least 3 peripheral proteins of the oxygen-evolving complex and a large number of cofactors. It forms dimeric complexes.

It is found in the plastid. The protein localises to the chloroplast thylakoid membrane. Found at the monomer-monomer interface of the photosystem II (PS II) dimer, plays a role in assembly and dimerization of PSII. PSII is a light-driven water plastoquinone oxidoreductase, using light energy to abstract electrons from H(2)O, generating a proton gradient subsequently used for ATP formation. The chain is Photosystem II reaction center protein T from Anthoceros angustus (Hornwort).